A 29-amino-acid polypeptide reads, in one-letter code: M-poneritoxin-Ng3d (29 aa).

Expressed by the venom gland.

The protein resides in the secreted. In terms of biological role, has activity against some Gram-positive bacteria and S.cerevisiae. Has a non-hemolytic activity. The chain is M-poneritoxin-Ng3d from Neoponera goeldii (Ponerine ant).